We begin with the raw amino-acid sequence, 461 residues long: Cysteine--tRNA ligase (461 aa).

Residue C28 participates in Zn(2+) binding. The 'HIGH' region motif lies at I30–H40. Zn(2+) is bound by residues C209, H234, and E238. A 'KMSKS' region motif is present at residues K266 to S270. K269 contacts ATP.

It belongs to the class-I aminoacyl-tRNA synthetase family. In terms of assembly, monomer. Requires Zn(2+) as cofactor.

It is found in the cytoplasm. It carries out the reaction tRNA(Cys) + L-cysteine + ATP = L-cysteinyl-tRNA(Cys) + AMP + diphosphate. The chain is Cysteine--tRNA ligase from Enterobacter sp. (strain 638).